Here is a 315-residue protein sequence, read N- to C-terminus: Glycerol-3-phosphate dehydrogenase [NAD(P)+] (315 aa).

NADPH contacts are provided by tryptophan 24, arginine 44, arginine 45, and lysine 92. Positions 92 and 120 each coordinate sn-glycerol 3-phosphate. Serine 124 is a binding site for NADPH. Lysine 175, aspartate 228, serine 238, arginine 239, and asparagine 240 together coordinate sn-glycerol 3-phosphate. The Proton acceptor role is filled by lysine 175. Arginine 239 provides a ligand contact to NADPH. Glutamate 265 serves as a coordination point for NADPH.

It belongs to the NAD-dependent glycerol-3-phosphate dehydrogenase family.

Its subcellular location is the cytoplasm. The enzyme catalyses sn-glycerol 3-phosphate + NAD(+) = dihydroxyacetone phosphate + NADH + H(+). It catalyses the reaction sn-glycerol 3-phosphate + NADP(+) = dihydroxyacetone phosphate + NADPH + H(+). It functions in the pathway membrane lipid metabolism; glycerophospholipid metabolism. Catalyzes the reduction of the glycolytic intermediate dihydroxyacetone phosphate (DHAP) to sn-glycerol 3-phosphate (G3P), the key precursor for phospholipid synthesis. In Synechococcus sp. (strain JA-2-3B'a(2-13)) (Cyanobacteria bacterium Yellowstone B-Prime), this protein is Glycerol-3-phosphate dehydrogenase [NAD(P)+].